Reading from the N-terminus, the 428-residue chain is UPF0053 inner membrane protein YfjD (428 aa).

The Cytoplasmic segment spans residues 1–3; that stretch reads MEH. In terms of domain architecture, CNNM transmembrane spans 2–192; that stretch reads EHISTTTLII…SQISRRNQDM (191 aa). Residues 4–24 form a helical membrane-spanning segment; that stretch reads ISTTTLIIILIIMVVISAYFS. The Periplasmic segment spans residues 25-64; that stretch reads GSETGMMTLNRYRLRHMAKQGNRSAKRVEKLLRKPDRLIS. A helical transmembrane segment spans residues 65 to 85; sequence LVLIGNNLVNILASALGTIVG. Over 86 to 91 the chain is Cytoplasmic; sequence MRLYGD. Residues 92 to 112 traverse the membrane as a helical segment; it reads AGVAIATGVLTFVVLVFAEVL. Over 113–129 the chain is Periplasmic; the sequence is PKTIAALYPEKVAYPSS. The chain crosses the membrane as a helical span at residues 130-150; it reads FLLAPLQILMMPLVWLLNAIT. Topologically, residues 151 to 428 are cytoplasmic; it reads RMLMRMMGIK…VKPLRESVAE (278 aa). 2 consecutive CBS domains span residues 208–270 and 272–332; these read MVPR…FTKE and MLRA…FTTS.

The protein belongs to the UPF0053 family.

Its subcellular location is the cell inner membrane. This Escherichia coli (strain K12) protein is UPF0053 inner membrane protein YfjD (yfjD).